The primary structure comprises 331 residues: UPF0329 protein ECU01_0080/ECU01_1530/ECU02_1560/ECU04_0090/ECU08_0010/ECU08_2090 (331 aa).

Residues 305-320 show a composition bias toward basic and acidic residues; it reads QRSEMEKRDREQDPER. The disordered stretch occupies residues 305 to 331; the sequence is QRSEMEKRDREQDPERRRLRARRVGSL. A compositionally biased stretch (basic residues) spans 321-331; that stretch reads RRLRARRVGSL.

Belongs to the UPF0329 family.

This chain is UPF0329 protein ECU01_0080/ECU01_1530/ECU02_1560/ECU04_0090/ECU08_0010/ECU08_2090, found in Encephalitozoon cuniculi (strain GB-M1) (Microsporidian parasite).